The sequence spans 167 residues: MNLRLELTRFLKLCFVLSSAFMFWKGLSIATNSHSPIVVVLSGSMEPAFQRGDVLFLWNRNERSKVGDVVIYEVQDKSIPIVHRVLREHHNDKNKQLLLTKGDNNAGDDIPLYGRKKIYLQKERDIVGTVKGYVPQLGYVTIWISENKYAKLALMGFLGISALLSNE.

Over 1–12 (MNLRLELTRFLK) the chain is Cytoplasmic. Residues 13-30 (LCFVLSSAFMFWKGLSIA) form a helical; Signal-anchor for type II membrane protein membrane-spanning segment. The Lumenal segment spans residues 31–167 (TNSHSPIVVV…LGISALLSNE (137 aa)). Residues Ser44, His83, and Asp109 each act as charge relay system in the active site. A C-terminal short (CTS) helix region spans residues 153 to 164 (ALMGFLGISALL).

Belongs to the peptidase S26B family. As to quaternary structure, component of the signal peptidase complex (SPC) composed of a catalytic subunit SEC11 and three accessory subunits SPC1, SPC2 and SPC3. The complex induces a local thinning of the ER membrane which is used to measure the length of the signal peptide (SP) h-region of protein substrates. This ensures the selectivity of the complex towards h-regions shorter than 18-20 amino acids. SPC associates with the translocon complex.

It is found in the endoplasmic reticulum membrane. The catalysed reaction is Cleavage of hydrophobic, N-terminal signal or leader sequences from secreted and periplasmic proteins.. Catalytic component of the signal peptidase complex (SPC) which catalyzes the cleavage of N-terminal signal sequences from nascent proteins as they are translocated into the lumen of the endoplasmic reticulum. Specifically cleaves N-terminal signal peptides that contain a hydrophobic alpha-helix (h-region) shorter than 18-20 amino acids. This Zygosaccharomyces rouxii (strain ATCC 2623 / CBS 732 / NBRC 1130 / NCYC 568 / NRRL Y-229) protein is Signal peptidase complex catalytic subunit SEC11 (SEC11).